The following is a 128-amino-acid chain: MTRSAMQMGRLTLVLCLLLLLLLTTQACFIRNCPKGGKRDVDERYLFKACMSCSFGQCVGPRICCGPRGCEMGTAEANRCIEEDEDPIPCQVVGQHCDLNNPGNIHGNCVANGICCVDDTCTIHTGCL.

A signal peptide spans 1 to 27 (MTRSAMQMGRLTLVLCLLLLLLLTTQA). The cysteines at positions 28 and 33 are disulfide-linked. G36 is modified (glycine amide). A propeptide spanning residues 37 to 44 (GKRDVDER) is cleaved from the precursor. 7 disulfides stabilise this stretch: C50-C90, C53-C64, C58-C80, C65-C70, C97-C115, C109-C127, and C116-C121.

The protein belongs to the vasopressin/oxytocin family. In terms of tissue distribution, expressed by the venom gland.

The protein resides in the secreted. Its function is as follows. Targets vasopressin-oxytocin related receptors. Is more active on fish receptors than on their human counterparts, supporting an evolved role of this conopressin in the envenomation process. Acts as an agonist on zebrafish vasopressin receptors V1a1R (EC(50)=10.6 nM), V1a2R (EC(50)=44.06 nM, partial agonist), V2R (EC(50)=299.2 nM) and oxytocin receptor (EC(50)=353.73 nM, partial agonist). Shows a weaker activity on human receptors AVPR1B (EC(50)=51.92 nM), AVPR1A (EC(50)=123.78 nM), AVPR2 (EC(50)=299.2 nM) and oxytocin (OXTR) receptor (EC(50)=455.66 nM, partial agonist). In vivo, exhibits grooming and scratching behavior in mice, following intracerebral injection. This is Conopressin-conophysin from Conus geographus (Geography cone).